Here is a 417-residue protein sequence, read N- to C-terminus: Queuine tRNA-ribosyltransferase accessory subunit 2 (417 aa).

Zn(2+) is bound by residues C324, C326, C329, and H355.

It belongs to the queuine tRNA-ribosyltransferase family. QTRT2 subfamily. In terms of assembly, heterodimer of a catalytic subunit and an accessory subunit. It depends on Zn(2+) as a cofactor.

The protein resides in the cytoplasm. In terms of biological role, non-catalytic subunit of the queuine tRNA-ribosyltransferase (TGT) that catalyzes the base-exchange of a guanine (G) residue with queuine (Q) at position 34 (anticodon wobble position) in tRNAs with GU(N) anticodons (tRNA-Asp, -Asn, -His and -Tyr), resulting in the hypermodified nucleoside queuosine (7-(((4,5-cis-dihydroxy-2-cyclopenten-1-yl)amino)methyl)-7-deazaguanosine). The polypeptide is Queuine tRNA-ribosyltransferase accessory subunit 2 (Drosophila virilis (Fruit fly)).